The following is a 440-amino-acid chain: Light-independent protochlorophyllide reductase subunit B (440 aa).

D36 is a [4Fe-4S] cluster binding site. 427–428 (KD) is a binding site for substrate.

Belongs to the ChlB/BchB/BchZ family. In terms of assembly, protochlorophyllide reductase is composed of three subunits; ChlL, ChlN and ChlB. Forms a heterotetramer of two ChlB and two ChlN subunits. [4Fe-4S] cluster is required as a cofactor.

It localises to the plastid. It is found in the cyanelle. The enzyme catalyses chlorophyllide a + oxidized 2[4Fe-4S]-[ferredoxin] + 2 ADP + 2 phosphate = protochlorophyllide a + reduced 2[4Fe-4S]-[ferredoxin] + 2 ATP + 2 H2O. The protein operates within porphyrin-containing compound metabolism; chlorophyll biosynthesis (light-independent). In terms of biological role, component of the dark-operative protochlorophyllide reductase (DPOR) that uses Mg-ATP and reduced ferredoxin to reduce ring D of protochlorophyllide (Pchlide) to form chlorophyllide a (Chlide). This reaction is light-independent. The NB-protein (ChlN-ChlB) is the catalytic component of the complex. The sequence is that of Light-independent protochlorophyllide reductase subunit B from Cyanophora paradoxa.